Reading from the N-terminus, the 37-residue chain is Large ribosomal subunit protein bL36 (37 aa).

The protein belongs to the bacterial ribosomal protein bL36 family.

This is Large ribosomal subunit protein bL36 from Salinispora arenicola (strain CNS-205).